A 462-amino-acid chain; its full sequence is ATP synthase subunit beta 1 (462 aa).

Residue 152-159 participates in ATP binding; sequence GGAGVGKT.

This sequence belongs to the ATPase alpha/beta chains family. As to quaternary structure, F-type ATPases have 2 components, CF(1) - the catalytic core - and CF(0) - the membrane proton channel. CF(1) has five subunits: alpha(3), beta(3), gamma(1), delta(1), epsilon(1). CF(0) has four main subunits: a(1), b(1), b'(1) and c(9-12).

It localises to the cell inner membrane. It carries out the reaction ATP + H2O + 4 H(+)(in) = ADP + phosphate + 5 H(+)(out). Its function is as follows. Produces ATP from ADP in the presence of a proton gradient across the membrane. The catalytic sites are hosted primarily by the beta subunits. The sequence is that of ATP synthase subunit beta 1 from Dinoroseobacter shibae (strain DSM 16493 / NCIMB 14021 / DFL 12).